The chain runs to 209 residues: Bilin biosynthesis protein RpcF (209 aa).

The protein belongs to the CpcE/RpcE/PecE family.

Its function is as follows. An enzyme involved in the biosynthesis of bilin. Might be involved in the specific attachment of phycoerythrobilin (PEB) to the R-phycocyanin II alpha chain. The polypeptide is Bilin biosynthesis protein RpcF (rpcF) (Synechococcus sp. (strain WH8020)).